We begin with the raw amino-acid sequence, 489 residues long: MPSPTKAAEAATKATATSDCSCSAASVEERGPVNAANPSSTXATSGKIGGKTQDQTAAINKPKEFAVPNETSDSGFISGPQSSQICSEEIVPDSEEQDKNQQQSAPQKEQPVVLDSGIIDEEEEHQDTTTATADSMRLKHSADTGIPQWTVESHLVNRGEQLNNLGQSSSTQITGRSKFQSSTASTANANPSGXGATSSAPPSSINIXNAWEQFYQQNDDGDTPXHLACISGSVEVVAALIRMAPHPCLLNIQNDVAQTPLHLAALTAQPNIMRILLLAGAEVRDRHGNTALHLSCIAGEKQCVRALTEEFGATEIHEAHRQYGHRSNDKAVSSLSFARLPADLEIRNYDGERCVHLAAEAGHIDILRILVSHGADINAREGKSGRTPLHIAIEGCNEDLANFLLDECEKLNLETATYAGLTAYQFACIMNKSRMQNILEKRGAETVTPPDSDYDSSDIEDLDDTKMYDRFGDPRYFVSYNGGNPMTVA.

Over residues 1-26 (MPSPTKAAEAATKATATSDCSCSAAS) the composition is skewed to low complexity. Disordered stretches follow at residues 1–138 (MPSP…SMRL) and 163–203 (NNLG…APPS). Serine 45 is modified (phosphoserine; by PKC). Positions 69–86 (NETSDSGFISGPQSSQIC) are enriched in polar residues. The residue at position 135 (serine 135) is a Phosphoserine; by PKC. Positions 163–180 (NNLGQSSSTQITGRSKFQ) are enriched in polar residues. Phosphothreonine; by PKC is present on threonine 174. Low complexity predominate over residues 181-203 (SSTASTANANPSGXGATSSAPPS). 5 ANK repeats span residues 220 to 252 (DGDT…LLNI), 256 to 285 (VAQT…EVRD), 287 to 316 (HGNT…ATEI), 350 to 379 (DGER…DINA), and 384 to 413 (SGRT…KLNL). Threonine 308 bears the Phosphothreonine; by PKC mark. Serine 384 is subject to Phosphoserine; by PKC.

The protein resides in the cytoplasm. In terms of biological role, involved in the formation of the dorsoventral pattern. It inhibits nuclear translocation of the dorsal morphogen in the dorsal region of the embryo. The polypeptide is NF-kappa-B inhibitor cactus (cact) (Drosophila yakuba (Fruit fly)).